A 351-amino-acid polypeptide reads, in one-letter code: Prostaglandin reductase 2 (351 aa).

Residue 99–100 (FY) coordinates substrate. NADP(+) contacts are provided by residues 165–168 (GACG), Lys192, Tyr208, Asn231, 253–259 (CGQISQY), 287–289 (FMV), and Asn337. 288 to 290 (MVL) provides a ligand contact to substrate.

This sequence belongs to the NADP-dependent oxidoreductase L4BD family. As to quaternary structure, monomer.

Its subcellular location is the cytoplasm. It catalyses the reaction 13,14-dihydro-15-oxo-prostaglandin E2 + NAD(+) = 15-oxoprostaglandin E2 + NADH + H(+). It carries out the reaction 13,14-dihydro-15-oxo-prostaglandin E2 + NADP(+) = 15-oxoprostaglandin E2 + NADPH + H(+). The enzyme catalyses 13,14-dihydro-15-oxo-PGF2alpha + NADP(+) = 15-oxoprostaglandin F2alpha + NADPH + H(+). The catalysed reaction is 13,14-dihydro-15-oxo-prostaglandin E1 + NADP(+) = 15-oxoprostaglandin E1 + NADPH + H(+). It catalyses the reaction 13,14-dihydro-15-oxo-prostaglandin F1alpha + NADP(+) = 15-oxoprostaglandin F1alpha + NADPH + H(+). Functionally, functions as 15-oxo-prostaglandin 13-reductase and acts on 15-keto-PGE1, 15-keto-PGE2, 15-keto-PGE1-alpha and 15-keto-PGE2-alpha with highest activity towards 15-keto-PGE2. Overexpression represses transcriptional activity of PPARG and inhibits adipocyte differentiation. The sequence is that of Prostaglandin reductase 2 from Rattus norvegicus (Rat).